A 1097-amino-acid chain; its full sequence is DNA-directed RNA polymerase subunit beta (1097 aa).

Residues 1072–1097 are disordered; sequence QDVNPRRSTPSRPTYESLGVADYDED.

It belongs to the RNA polymerase beta chain family. As to quaternary structure, in cyanobacteria the RNAP catalytic core is composed of 2 alpha, 1 beta, 1 beta', 1 gamma and 1 omega subunit. When a sigma factor is associated with the core the holoenzyme is formed, which can initiate transcription.

It carries out the reaction RNA(n) + a ribonucleoside 5'-triphosphate = RNA(n+1) + diphosphate. Functionally, DNA-dependent RNA polymerase catalyzes the transcription of DNA into RNA using the four ribonucleoside triphosphates as substrates. The polypeptide is DNA-directed RNA polymerase subunit beta (Prochlorococcus marinus (strain MIT 9303)).